A 156-amino-acid polypeptide reads, in one-letter code: Ribosomal RNA large subunit methyltransferase H (156 aa).

Residues L73, G104, and 123 to 128 contribute to the S-adenosyl-L-methionine site; that span reads LSPLTL.

The protein belongs to the RNA methyltransferase RlmH family. As to quaternary structure, homodimer.

Its subcellular location is the cytoplasm. It catalyses the reaction pseudouridine(1915) in 23S rRNA + S-adenosyl-L-methionine = N(3)-methylpseudouridine(1915) in 23S rRNA + S-adenosyl-L-homocysteine + H(+). In terms of biological role, specifically methylates the pseudouridine at position 1915 (m3Psi1915) in 23S rRNA. The polypeptide is Ribosomal RNA large subunit methyltransferase H (Pseudoalteromonas atlantica (strain T6c / ATCC BAA-1087)).